Consider the following 607-residue polypeptide: Type 3 secretion system secretin (607 aa).

The N-terminal stretch at 1 to 33 is a signal peptide; it reads MAPACTTAHRRRAPLAAVLMLSLLPLLSPHADA. The disordered stretch occupies residues 277–332; it reads ASSSDRVPVSPPLPGSGAAAAAGSPASVWPELSKGRRDESNPIDAGGGAELASDAP. Residues 291 to 306 are compositionally biased toward low complexity; the sequence is GSGAAAAAGSPASVWP.

The protein belongs to the bacterial secretin family. T3SS SctC subfamily. The core secretion machinery of the T3SS is composed of approximately 20 different proteins, including cytoplasmic components, a base, an export apparatus and a needle. This subunit is part of the base, which anchors the injectisome in the bacterial cell envelope. Forms a stable homooligomeric complex.

The protein localises to the cell outer membrane. Its function is as follows. Component of the type III secretion system (T3SS), also called injectisome, which is used to inject bacterial effector proteins into eukaryotic host cells. Forms a ring-shaped multimeric structure with an apparent central pore in the outer membrane. Necessary for both basic pathogenicity and the induction of the hypersensitive response in resistant plants. The protein is Type 3 secretion system secretin of Xanthomonas euvesicatoria.